The primary structure comprises 126 residues: Profilin-1A (126 aa).

The actin binding stretch occupies residues 2-36; the sequence is SWQTYVDTNLVGTGAVTQAAILGLDGNTWATSAGF. Lysine 104 carries the post-translational modification N6,N6,N6-trimethyllysine.

Belongs to the profilin family. As to quaternary structure, occurs in many kinds of cells as a complex with monomeric actin in a 1:1 ratio.

Its subcellular location is the cytoplasm. The protein localises to the cytoskeleton. In terms of biological role, binds to actin and affects the structure of the cytoskeleton. At high concentrations, profilin prevents the polymerization of actin, whereas it enhances it at low concentrations. By binding to PIP2, it inhibits the formation of IP3 and DG. The protein is Profilin-1A of Acanthamoeba castellanii (Amoeba).